Here is a 357-residue protein sequence, read N- to C-terminus: Retinoic acid-induced protein 3 (357 aa).

At 1–33 (MATTVPDGCRNGLKSKYYRLCDKAEAWGIVLET) the chain is on the extracellular side. Residues 34-54 (VATAGVVTSVAFMLTLPILVC) traverse the membrane as a helical segment. Residues 55–68 (KVQDSNRRKMLPTQ) are Cytoplasmic-facing. A helical transmembrane segment spans residues 69–89 (FLFLLGVLGIFGLTFAFIIGL). At 90–97 (DGSTGPTR) the chain is on the extracellular side. The chain crosses the membrane as a helical span at residues 98-118 (FFLFGILFSICFSCLLAHAVS). At 119 to 129 (LTKLVRGRKPL) the chain is on the cytoplasmic side. A helical membrane pass occupies residues 130 to 150 (SLLVILGLAVGFSLVQDVIAI). At 151–176 (EYIVLTMNRTNVNVFSELSAPRRNED) the chain is on the extracellular side. Residue asparagine 158 is glycosylated (N-linked (GlcNAc...) asparagine). The chain crosses the membrane as a helical span at residues 177-197 (FVLLLTYVLFLMALTFLMSSF). Topologically, residues 198 to 212 (TFCGSFTGWKRHGAH) are cytoplasmic. A helical transmembrane segment spans residues 213 to 233 (IYLTMLLSIAIWVAWITLLML). Residues 234–247 (PDFDRRWDDTILSS) lie on the Extracellular side of the membrane. The chain crosses the membrane as a helical span at residues 248 to 268 (ALAANGWVFLLAYVSPEFWLL). Residues 269-357 (TKQRNPMDYP…KDYEVKKEGS (89 aa)) are Cytoplasmic-facing. Phosphoserine is present on serine 301. 2 positions are modified to phosphotyrosine: tyrosine 317 and tyrosine 320. Phosphoserine is present on serine 345. A phosphotyrosine mark is found at tyrosine 347 and tyrosine 350.

The protein belongs to the G-protein coupled receptor 3 family. Interacts (via its transmembrane domain) with EGFR. Post-translationally, phosphorylated in two conserved double-tyrosine motifs, Tyr-317/Tyr-320 and Tyr-347/Tyr-350, by EGFR; leading to inactivation of the tumor suppressive function of GPRC5A in lung cancer cells. Tyr-317 and Tyr-320 are the preferred residues responsible for EGFR-mediated GPRC5A phosphorylation. Expressed at high level in fetal and adult lung tissues but repressed in most human lung cancers. Constitutively expressed in fetal kidney and adult placenta, kidney, prostate, testis, ovary, small intestine, colon, stomach, and spinal cord at low to moderate levels. Not detectable in fetal heart, brain, and liver and adult heart, brain, liver, skeletal muscle, pancreas, spleen, thymus, and peripheral leukocytes. According to PubMed:10783259, expressed at low but detectable level in pancreas and heart.

It localises to the cell membrane. It is found in the cytoplasmic vesicle membrane. In terms of biological role, orphan receptor. Could be involved in modulating differentiation and maintaining homeostasis of epithelial cells. This retinoic acid-inducible GPCR provide evidence for a possible interaction between retinoid and G-protein signaling pathways. Functions as a negative modulator of EGFR signaling. May act as a lung tumor suppressor. This Homo sapiens (Human) protein is Retinoic acid-induced protein 3 (GPRC5A).